The chain runs to 105 residues: uncharacterized protein (105 aa).

The interval 80–105 is disordered; it reads TGGPTSSTCTRRSDLATGRGSDRRPD.

This is an uncharacterized protein from Micromonospora rosea.